We begin with the raw amino-acid sequence, 277 residues long: 3-methyl-2-oxobutanoate hydroxymethyltransferase (277 aa).

Mg(2+) contacts are provided by D58 and D97. 3-methyl-2-oxobutanoate-binding positions include 58 to 59 (DS), D97, and K127. Mg(2+) is bound at residue E129. E195 functions as the Proton acceptor in the catalytic mechanism.

The protein belongs to the PanB family. Homodecamer; pentamer of dimers. Requires Mg(2+) as cofactor.

It localises to the cytoplasm. The catalysed reaction is 3-methyl-2-oxobutanoate + (6R)-5,10-methylene-5,6,7,8-tetrahydrofolate + H2O = 2-dehydropantoate + (6S)-5,6,7,8-tetrahydrofolate. Its pathway is cofactor biosynthesis; (R)-pantothenate biosynthesis; (R)-pantoate from 3-methyl-2-oxobutanoate: step 1/2. Catalyzes the reversible reaction in which hydroxymethyl group from 5,10-methylenetetrahydrofolate is transferred onto alpha-ketoisovalerate to form ketopantoate. This is 3-methyl-2-oxobutanoate hydroxymethyltransferase from Leifsonia xyli subsp. xyli (strain CTCB07).